A 322-amino-acid polypeptide reads, in one-letter code: GTP 3',8-cyclase (322 aa).

The region spanning 5–217 (SYGRVVDYLR…DIISKKYNIK (213 aa)) is the Radical SAM core domain. Position 14 (arginine 14) interacts with GTP. [4Fe-4S] cluster is bound by residues cysteine 21 and cysteine 25. Tyrosine 27 contributes to the S-adenosyl-L-methionine binding site. Cysteine 28 lines the [4Fe-4S] cluster pocket. Arginine 64 is a binding site for GTP. Glycine 68 lines the S-adenosyl-L-methionine pocket. Position 95 (threonine 95) interacts with GTP. Serine 119 contributes to the S-adenosyl-L-methionine binding site. Residue lysine 155 participates in GTP binding. S-adenosyl-L-methionine is bound at residue methionine 189. 2 residues coordinate [4Fe-4S] cluster: cysteine 249 and cysteine 252. A GTP-binding site is contributed by 254–256 (RLR). Cysteine 266 lines the [4Fe-4S] cluster pocket.

Belongs to the radical SAM superfamily. MoaA family. As to quaternary structure, monomer and homodimer. Requires [4Fe-4S] cluster as cofactor.

The enzyme catalyses GTP + AH2 + S-adenosyl-L-methionine = (8S)-3',8-cyclo-7,8-dihydroguanosine 5'-triphosphate + 5'-deoxyadenosine + L-methionine + A + H(+). Its pathway is cofactor biosynthesis; molybdopterin biosynthesis. Its function is as follows. Catalyzes the cyclization of GTP to (8S)-3',8-cyclo-7,8-dihydroguanosine 5'-triphosphate. This chain is GTP 3',8-cyclase, found in Campylobacter fetus subsp. fetus (strain 82-40).